We begin with the raw amino-acid sequence, 137 residues long: Small ribosomal subunit protein uS12 (137 aa).

A disordered region spans residues 1–57; the sequence is MPTINQLVRKPRKSKVEKSKSPALNVGYNSHKKVQTNVSSPQKRGVATRVGTMTPKK. A 3-methylthioaspartic acid modification is found at Asp102.

It belongs to the universal ribosomal protein uS12 family. As to quaternary structure, part of the 30S ribosomal subunit. Contacts proteins S8 and S17. May interact with IF1 in the 30S initiation complex.

With S4 and S5 plays an important role in translational accuracy. In terms of biological role, interacts with and stabilizes bases of the 16S rRNA that are involved in tRNA selection in the A site and with the mRNA backbone. Located at the interface of the 30S and 50S subunits, it traverses the body of the 30S subunit contacting proteins on the other side and probably holding the rRNA structure together. The combined cluster of proteins S8, S12 and S17 appears to hold together the shoulder and platform of the 30S subunit. This Streptococcus sanguinis (strain SK36) protein is Small ribosomal subunit protein uS12.